Consider the following 129-residue polypeptide: Small ribosomal subunit protein uS11 (129 aa).

The protein belongs to the universal ribosomal protein uS11 family. In terms of assembly, part of the 30S ribosomal subunit. Interacts with proteins S7 and S18. Binds to IF-3.

Located on the platform of the 30S subunit, it bridges several disparate RNA helices of the 16S rRNA. Forms part of the Shine-Dalgarno cleft in the 70S ribosome. This Dinoroseobacter shibae (strain DSM 16493 / NCIMB 14021 / DFL 12) protein is Small ribosomal subunit protein uS11.